A 404-amino-acid chain; its full sequence is Tryptophan synthase beta chain (404 aa).

At Lys94 the chain carries N6-(pyridoxal phosphate)lysine.

The protein belongs to the TrpB family. As to quaternary structure, tetramer of two alpha and two beta chains. Pyridoxal 5'-phosphate serves as cofactor.

The catalysed reaction is (1S,2R)-1-C-(indol-3-yl)glycerol 3-phosphate + L-serine = D-glyceraldehyde 3-phosphate + L-tryptophan + H2O. It functions in the pathway amino-acid biosynthesis; L-tryptophan biosynthesis; L-tryptophan from chorismate: step 5/5. The beta subunit is responsible for the synthesis of L-tryptophan from indole and L-serine. The protein is Tryptophan synthase beta chain of Staphylococcus aureus (strain JH1).